A 237-amino-acid polypeptide reads, in one-letter code: D-aminoacyl-tRNA deacylase (237 aa).

Belongs to the DtdA deacylase family. Monomer. The cofactor is Zn(2+).

It catalyses the reaction a D-aminoacyl-tRNA + H2O = a tRNA + a D-alpha-amino acid + H(+). The catalysed reaction is glycyl-tRNA(Ala) + H2O = tRNA(Ala) + glycine + H(+). Its function is as follows. D-aminoacyl-tRNA deacylase with broad substrate specificity. By recycling D-aminoacyl-tRNA to D-amino acids and free tRNA molecules, this enzyme counteracts the toxicity associated with the formation of D-aminoacyl-tRNA entities in vivo. In Metallosphaera sedula (strain ATCC 51363 / DSM 5348 / JCM 9185 / NBRC 15509 / TH2), this protein is D-aminoacyl-tRNA deacylase.